The following is a 120-amino-acid chain: Holo-[acyl-carrier-protein] synthase (120 aa).

Mg(2+) is bound by residues D8 and E58.

It belongs to the P-Pant transferase superfamily. AcpS family. Mg(2+) is required as a cofactor.

It is found in the cytoplasm. It carries out the reaction apo-[ACP] + CoA = holo-[ACP] + adenosine 3',5'-bisphosphate + H(+). Its function is as follows. Transfers the 4'-phosphopantetheine moiety from coenzyme A to a Ser of acyl-carrier-protein. The chain is Holo-[acyl-carrier-protein] synthase from Streptococcus sanguinis (strain SK36).